The primary structure comprises 277 residues: NAD kinase (277 aa).

D67 functions as the Proton acceptor in the catalytic mechanism. NAD(+) contacts are provided by residues 67–68, R72, 137–138, K148, R165, D167, 178–183, L202, and Q236; these read DG, NE, and TGYAMS.

It belongs to the NAD kinase family. It depends on a divalent metal cation as a cofactor.

Its subcellular location is the cytoplasm. The enzyme catalyses NAD(+) + ATP = ADP + NADP(+) + H(+). Involved in the regulation of the intracellular balance of NAD and NADP, and is a key enzyme in the biosynthesis of NADP. Catalyzes specifically the phosphorylation on 2'-hydroxyl of the adenosine moiety of NAD to yield NADP. This is NAD kinase from Pyrococcus furiosus (strain ATCC 43587 / DSM 3638 / JCM 8422 / Vc1).